A 203-amino-acid polypeptide reads, in one-letter code: Glycerol-3-phosphate acyltransferase (203 aa).

The next 5 membrane-spanning stretches (helical) occupy residues Ile-5 to Leu-25, Leu-55 to Ala-75, Ile-84 to Val-104, Ile-118 to Ala-138, and Ile-159 to Leu-179.

Belongs to the PlsY family. Probably interacts with PlsX.

The protein resides in the cell inner membrane. It carries out the reaction an acyl phosphate + sn-glycerol 3-phosphate = a 1-acyl-sn-glycero-3-phosphate + phosphate. Its pathway is lipid metabolism; phospholipid metabolism. Catalyzes the transfer of an acyl group from acyl-phosphate (acyl-PO(4)) to glycerol-3-phosphate (G3P) to form lysophosphatidic acid (LPA). This enzyme utilizes acyl-phosphate as fatty acyl donor, but not acyl-CoA or acyl-ACP. This chain is Glycerol-3-phosphate acyltransferase, found in Rhodopseudomonas palustris (strain ATCC BAA-98 / CGA009).